The primary structure comprises 126 residues: RxLR effector protein BLR31 (126 aa).

The signal sequence occupies residues 1–22; it reads MLLSRAISVLALLACIRCGVHA. The RxLR-dEER signature appears at 44–58; that stretch reads RLLRTSVDFKDSEER.

This sequence belongs to the RxLR effector family.

The protein localises to the secreted. The protein resides in the host cell. In terms of biological role, secreted effector that triggers a hypersensitive response (HR) in 3 Lactuca saligna accessions (CGN05947, CGN05310, CGN05304). In Bremia lactucae (Lettuce downy mildew), this protein is RxLR effector protein BLR31.